A 180-amino-acid chain; its full sequence is Alkyl hydroperoxide reductase AhpD (180 aa).

C131 functions as the Proton donor in the catalytic mechanism. An intrachain disulfide couples C131 to C134. The active-site Cysteine sulfenic acid (-SOH) intermediate is the C134.

Belongs to the AhpD family.

It catalyses the reaction N(6)-[(R)-dihydrolipoyl]-L-lysyl-[lipoyl-carrier protein] + a hydroperoxide = N(6)-[(R)-lipoyl]-L-lysyl-[lipoyl-carrier protein] + an alcohol + H2O. In terms of biological role, antioxidant protein with alkyl hydroperoxidase activity. Required for the reduction of the AhpC active site cysteine residues and for the regeneration of the AhpC enzyme activity. The chain is Alkyl hydroperoxide reductase AhpD from Hyphomonas neptunium (strain ATCC 15444).